The following is an 866-amino-acid chain: MSSLVLGLHEIEKTQLSLVGGKGLHLGELSKIQGIQVPEGFCVTTVGYQKAIEQNETLQVLLDQLTMLKVEDRDQIGNISRKIRQIIMEVDIPSDVVKAVAQYLSQFGEEHAYAVRSSATAEDLPHASFAGQQDTYLNITGVDAILQHISKCWASLFTDRAVIYRMQNGFDHSQVYLSVIVQRMVFPQASGILFTADPITSNRKVLSIDAGFGLGEALVSGLVSADCFKVQDGQIIDKRIATKKMAIYGRKEGGTETQQIDSDQQKAQTLTDEQILQLARIGRQIEAHFGQPQDIEWCLARDTFYIVQSRPITTLFPIPEASDQENHVYISVGHQQMMTDPIKPLGLSFFLLTTVAPMRKAGGRLFVDVTHHLASPDSREVFLKGMGQHDQLLKDALMTIIKRRDFIKSIPNDKTAPNPSRGNADMPAQVENDPTIVSDLIESSQTSIEELKQNIQTKSGSDLFRFILEDIQELKKILFNPKSSVLIRTAMNASLWINEKMNEWLGEKNAADTLSQSVPHNITSEMGLALLDVADVIRPYPEVIDYLQHVKDDNFLDELAKFDGGSKTRDAIYDYLSKYGMRCTGEIDITRTRWSEKPTTLVPMILNNIKNFEPNVGHRKFEQGRQEALKKEQELLDRLKQLPDGEQKAKETKRAIDIIRNFSGFREYPKYGMVNRYFVYKQALLKEAEQLIEAGVIHEKEDIYYLTFEELHEVVRTHKLDYQIISTRKDEYTLYEKLSPPRVITSDGEIVTGEYKRENLPAGAIVGLPVSSGVIEGRARVILNMEDADLEDGDILVTSFTDPSWTPLFVSIKGLVTEVGGLMTHGAVIAREYGLPAVVGVENAAKLIKDGQRIRVHGTEGYIEIF.

The tract at residues 1–313 is ATP-binding; it reads MSSLVLGLHE…FYIVQSRPIT (313 aa). Lys22, Arg116, Gly131, Thr135, Gln182, Glu296, Gln308, and Arg310 together coordinate ATP. The rifampicin-binding stretch occupies residues 326–754; that stretch reads NHVYISVGHQ…TSDGEIVTGE (429 aa). The interval 410–429 is disordered; sequence IPNDKTAPNPSRGNADMPAQ. A swivel phosphohistidine region spans residues 767–865; that stretch reads GLPVSSGVIE…VHGTEGYIEI (99 aa). His825 (tele-phosphohistidine intermediate) is an active-site residue.

The protein belongs to the rifampicin phosphotransferase family.

It carries out the reaction rifampicin + ATP + H2O = 21-phosphorifampicin + AMP + phosphate + 2 H(+). Catalyzes the phosphorylation of rifampicin, also known as rifampin (RIF), leading to its inactivation. This is Rifampicin phosphotransferase from Bacillus subtilis (strain 168).